A 286-amino-acid chain; its full sequence is ATP synthase gamma chain (286 aa).

The protein belongs to the ATPase gamma chain family. As to quaternary structure, F-type ATPases have 2 components, CF(1) - the catalytic core - and CF(0) - the membrane proton channel. CF(1) has five subunits: alpha(3), beta(3), gamma(1), delta(1), epsilon(1). CF(0) has three main subunits: a, b and c.

Its subcellular location is the cell inner membrane. Functionally, produces ATP from ADP in the presence of a proton gradient across the membrane. The gamma chain is believed to be important in regulating ATPase activity and the flow of protons through the CF(0) complex. The protein is ATP synthase gamma chain of Shewanella baltica (strain OS223).